Consider the following 89-residue polypeptide: MALDAAVKQTIITEYATHEGDTGSPEVQIAMLSQRIKDLTEHLKTHKHDHHSRRGLMLLVGQRRRLLGYLQKVDVNRYRALIERLGLRR.

Belongs to the universal ribosomal protein uS15 family. In terms of assembly, part of the 30S ribosomal subunit. Forms a bridge to the 50S subunit in the 70S ribosome, contacting the 23S rRNA.

In terms of biological role, one of the primary rRNA binding proteins, it binds directly to 16S rRNA where it helps nucleate assembly of the platform of the 30S subunit by binding and bridging several RNA helices of the 16S rRNA. Functionally, forms an intersubunit bridge (bridge B4) with the 23S rRNA of the 50S subunit in the ribosome. The polypeptide is Small ribosomal subunit protein uS15 (Beutenbergia cavernae (strain ATCC BAA-8 / DSM 12333 / CCUG 43141 / JCM 11478 / NBRC 16432 / NCIMB 13614 / HKI 0122)).